Reading from the N-terminus, the 72-residue chain is MARVTVEDCLDKVETRFDLVVLASMRANNILKKGYSESADNEKKEKATVVALREIAESEITPDQILRNEIEG.

It belongs to the RNA polymerase subunit omega family. As to quaternary structure, the RNAP catalytic core consists of 2 alpha, 1 beta, 1 beta' and 1 omega subunit. When a sigma factor is associated with the core the holoenzyme is formed, which can initiate transcription.

It carries out the reaction RNA(n) + a ribonucleoside 5'-triphosphate = RNA(n+1) + diphosphate. Functionally, promotes RNA polymerase assembly. Latches the N- and C-terminal regions of the beta' subunit thereby facilitating its interaction with the beta and alpha subunits. The protein is DNA-directed RNA polymerase subunit omega of Francisella philomiragia subsp. philomiragia (strain ATCC 25017 / CCUG 19701 / FSC 153 / O#319-036).